Here is a 61-residue protein sequence, read N- to C-terminus: Small ribosomal subunit protein uS14C (61 aa).

Residues C24, C27, C40, and C43 each coordinate Zn(2+).

It belongs to the universal ribosomal protein uS14 family. Zinc-binding uS14 subfamily. As to quaternary structure, part of the 30S ribosomal subunit. Contacts proteins S3 and S10. It depends on Zn(2+) as a cofactor.

Binds 16S rRNA, required for the assembly of 30S particles and may also be responsible for determining the conformation of the 16S rRNA at the A site. This chain is Small ribosomal subunit protein uS14C, found in Bacillus licheniformis (strain ATCC 14580 / DSM 13 / JCM 2505 / CCUG 7422 / NBRC 12200 / NCIMB 9375 / NCTC 10341 / NRRL NRS-1264 / Gibson 46).